A 246-amino-acid polypeptide reads, in one-letter code: Acetoacetate decarboxylase (246 aa).

Lys116 functions as the Schiff-base intermediate with acetoacetate in the catalytic mechanism.

Belongs to the ADC family. As to quaternary structure, homododecamer.

It catalyses the reaction acetoacetate + H(+) = acetone + CO2. Its function is as follows. Catalyzes the conversion of acetoacetate to acetone and carbon dioxide. This is Acetoacetate decarboxylase from Chromobacterium violaceum (strain ATCC 12472 / DSM 30191 / JCM 1249 / CCUG 213 / NBRC 12614 / NCIMB 9131 / NCTC 9757 / MK).